Here is a 185-residue protein sequence, read N- to C-terminus: Elongation factor P (185 aa).

Belongs to the elongation factor P family.

It is found in the cytoplasm. It participates in protein biosynthesis; polypeptide chain elongation. In terms of biological role, involved in peptide bond synthesis. Stimulates efficient translation and peptide-bond synthesis on native or reconstituted 70S ribosomes in vitro. Probably functions indirectly by altering the affinity of the ribosome for aminoacyl-tRNA, thus increasing their reactivity as acceptors for peptidyl transferase. The polypeptide is Elongation factor P (Brevibacillus brevis (strain 47 / JCM 6285 / NBRC 100599)).